A 98-amino-acid chain; its full sequence is C-C motif chemokine 19 (98 aa).

The signal sequence occupies residues 1 to 21 (MALLLALSLLVLWTSPAPTLS). Cystine bridges form between cysteine 29–cysteine 55 and cysteine 30–cysteine 71.

The protein belongs to the intercrine beta (chemokine CC) family. As to quaternary structure, interacts with TNFAIP6 (via Link domain). As to expression, expressed at high levels in the lymph nodes, thymus and appendix. Intermediate levels seen in colon and trachea, while low levels found in spleen, small intestine, lung, kidney and stomach.

It localises to the secreted. In terms of biological role, may play a role not only in inflammatory and immunological responses but also in normal lymphocyte recirculation and homing. May play an important role in trafficking of T-cells in thymus, and T-cell and B-cell migration to secondary lymphoid organs. Binds to chemokine receptor CCR7. Recombinant CCL19 shows potent chemotactic activity for T-cells and B-cells but not for granulocytes and monocytes. Binds to atypical chemokine receptor ACKR4 and mediates the recruitment of beta-arrestin (ARRB1/2) to ACKR4. This is C-C motif chemokine 19 (CCL19) from Homo sapiens (Human).